Reading from the N-terminus, the 469-residue chain is UDP-N-acetylmuramate--L-alanine ligase (469 aa).

113 to 119 (GTHGKTT) is a binding site for ATP.

Belongs to the MurCDEF family.

The protein localises to the cytoplasm. It catalyses the reaction UDP-N-acetyl-alpha-D-muramate + L-alanine + ATP = UDP-N-acetyl-alpha-D-muramoyl-L-alanine + ADP + phosphate + H(+). Its pathway is cell wall biogenesis; peptidoglycan biosynthesis. In terms of biological role, cell wall formation. This chain is UDP-N-acetylmuramate--L-alanine ligase, found in Neisseria meningitidis serogroup C / serotype 2a (strain ATCC 700532 / DSM 15464 / FAM18).